The sequence spans 552 residues: Macrophage colony-stimulating factor 1 (552 aa).

An N-terminal signal peptide occupies residues 1–32 (MTARGAAGRCPSSTWLGSRLLLVCLLMSRSIA). The Extracellular portion of the chain corresponds to 33-492 (KEVSEHCSHM…EGSSDPQIPE (460 aa)). 3 cysteine pairs are disulfide-bonded: cysteine 39–cysteine 122, cysteine 80–cysteine 171, and cysteine 134–cysteine 178. Asparagine 107, asparagine 154, and asparagine 172 each carry an N-linked (GlcNAc...) asparagine glycan. Residues 197-207 (TPSSDPASASP) show a composition bias toward low complexity. The interval 197–293 (TPSSDPASAS…GGPVPGVEDI (97 aa)) is disordered. Residues 254 to 267 (PRSTCQTLESTEQP) show a composition bias toward polar residues. Positions 268–278 (NHGDRLTEDSQ) are enriched in basic and acidic residues. The O-linked (Xyl...) (chondroitin sulfate) serine glycan is linked to serine 308. Disordered regions lie at residues 321–412 (KFSP…RVSN) and 439–465 (GKRS…ARPV). Basic and acidic residues-rich tracts occupy residues 350–364 (STED…DRPL), 382–396 (EKTD…DHQE), and 439–450 (GKRSTRDRRSPA). Residue threonine 360 is glycosylated (O-linked (GalNAc...) threonine). Residues 493–515 (SVFHLLVPGIILVLLTVGGLLFY) traverse the membrane as a helical segment. At 516 to 552 (KWKWRSHRDPQTLDSSVGRPEDSSLTQDEDRQVELPV) the chain is on the cytoplasmic side. Residues 525 to 552 (PQTLDSSVGRPEDSSLTQDEDRQVELPV) are disordered. Positions 543-552 (DEDRQVELPV) are enriched in basic and acidic residues.

As to quaternary structure, homodimer or heterodimer; disulfide-linked. Likely to exist in multiple forms: homodimer consisting of 2 identical 150-200 kDa proteoglycan subunits, heterodimer consisting of a 150-200 kDa proteoglycan subunit and a truncated 43 kDa subunit, and homodimer consisting of 2 identical 43 kDa subunits. Interacts with CSF1R. Post-translationally, N-glycosylated. O-glycosylated; contains chondroitin sulfate.

It localises to the cell membrane. It is found in the secreted. Its subcellular location is the extracellular space. In terms of biological role, cytokine that plays an essential role in the regulation of survival, proliferation and differentiation of hematopoietic precursor cells, especially mononuclear phagocytes, such as macrophages and monocytes. Promotes the release of pro-inflammatory chemokines, and thereby plays an important role in innate immunity and in inflammatory processes. Plays an important role in the regulation of osteoclast proliferation and differentiation, the regulation of bone resorption, and is required for normal bone development. Required for normal male and female fertility. Promotes reorganization of the actin cytoskeleton, regulates formation of membrane ruffles, cell adhesion and cell migration. Plays a role in lipoprotein clearance. The sequence is that of Macrophage colony-stimulating factor 1 (Csf1) from Mus musculus (Mouse).